The primary structure comprises 531 residues: uncharacterized protein (531 aa).

An N-terminal signal peptide occupies residues M1–A22. C23 carries N-palmitoyl cysteine lipidation. C23 carries S-diacylglycerol cysteine lipidation. Residues E31 to P51 form a disordered region. A compositionally biased stretch (low complexity) spans P40–P51.

It belongs to the MG067/MG068/MG395 family.

It localises to the cell membrane. This is an uncharacterized protein from Mycoplasma pneumoniae (strain ATCC 29342 / M129 / Subtype 1) (Mycoplasmoides pneumoniae).